Consider the following 629-residue polypeptide: tRNA uridine 5-carboxymethylaminomethyl modification enzyme MnmG (629 aa).

Residue 13–18 coordinates FAD; that stretch reads GGGHAG. 273-287 contributes to the NAD(+) binding site; sequence GPRYCPSIEDKVVRF.

The protein belongs to the MnmG family. As to quaternary structure, homodimer. Heterotetramer of two MnmE and two MnmG subunits. The cofactor is FAD.

It is found in the cytoplasm. NAD-binding protein involved in the addition of a carboxymethylaminomethyl (cmnm) group at the wobble position (U34) of certain tRNAs, forming tRNA-cmnm(5)s(2)U34. This is tRNA uridine 5-carboxymethylaminomethyl modification enzyme MnmG from Nitrosococcus oceani (strain ATCC 19707 / BCRC 17464 / JCM 30415 / NCIMB 11848 / C-107).